The sequence spans 285 residues: Polyamine aminopropyltransferase (285 aa).

One can recognise a PABS domain in the interval 5–241 (DNWYIEHFQP…GWWSVTMASK (237 aa)). Residue glutamine 35 participates in S-methyl-5'-thioadenosine binding. Residues histidine 66 and aspartate 90 each coordinate spermidine. Residues aspartate 110 and 141–142 (DG) each bind S-methyl-5'-thioadenosine. Aspartate 160 functions as the Proton acceptor in the catalytic mechanism. Position 160–163 (160–163 (DSTD)) interacts with spermidine. Proline 167 provides a ligand contact to S-methyl-5'-thioadenosine.

It belongs to the spermidine/spermine synthase family. As to quaternary structure, homodimer or homotetramer.

The protein resides in the cytoplasm. It carries out the reaction S-adenosyl 3-(methylsulfanyl)propylamine + putrescine = S-methyl-5'-thioadenosine + spermidine + H(+). The protein operates within amine and polyamine biosynthesis; spermidine biosynthesis; spermidine from putrescine: step 1/1. In terms of biological role, catalyzes the irreversible transfer of a propylamine group from the amino donor S-adenosylmethioninamine (decarboxy-AdoMet) to putrescine (1,4-diaminobutane) to yield spermidine. In Xanthomonas axonopodis pv. citri (strain 306), this protein is Polyamine aminopropyltransferase.